Consider the following 1981-residue polypeptide: Nonribosomal peptide synthetase rstn8 (1981 aa).

Positions 251–638 (SYAALEQESA…ELGEIEYQAS (388 aa)) are adenylation. The Carrier 1 domain maps to 763–840 (HHAGQKYDEM…ELFHRSQKTP (78 aa)). The residue at position 800 (Ser800) is an O-(pantetheine 4'-phosphoryl)serine. The interval 883-1293 (EDIYPCSPLQ…DASMGTILSQ (411 aa)) is condensation 1. One can recognise a Carrier 2 domain in the interval 1438 to 1514 (EPLLPLEATL…CLASTLNSRP (77 aa)). An O-(pantetheine 4'-phosphoryl)serine modification is found at Ser1475. A condensation 1 region spans residues 1586–1978 (EEQIDLVSFA…TFAQSIERII (393 aa)). The disordered stretch occupies residues 1754 to 1774 (HHHHQHEGRQHHGASETNGNR).

It belongs to the NRP synthetase family. Pantetheine 4'-phosphate is required as a cofactor.

The enzyme catalyses 2 L-tryptophan = cyclo(L-Trp-L-Trp) + 2 H2O. Its pathway is alkaloid biosynthesis. Nonribosomal peptide synthetase; part of the gene cluster that mediates the biosynthesis of okaramine B, a prenylated indole alkaloid that possesses an unusual octacyclic ring system, including a four-membered azetidine ring and an eight-membered azocine ring, and that exhibits insecticidal activity against silkworm larvae. Within the pathway, okaA acts as a bimodular non-ribosomal peptide synthetase (NRPS) that condenses two tryptophan molecules into cyclo(L-Trp-L-Trp). Prenylation by the prenyltransferase okaC then leads to the formation of cyclo(N8-(alpha,alpha-dimethylallyl)-L-Trp-6a-(alpha,alpha-dime-thylallyl)-L-Trp). This is followed by indole 2,3-epoxidation by the FAD-dependent monooxygenase okaB to facilitate the formation of the hexahydropyrrolo[2,3-b]indole (HPI) moiety of okaramine C. The cytochrome P450 monooxygenase okaD then likely catalyzes formation of the eight-membered ring of okaramine A. The dioxygenase okaE further forms the unusual 2-dimethyl-3-methyl-azetidine ring to yield 12-deshydroxyl okaramine E, as well as the hydroxylation of 12-deshydroxyl okaramine E to produce okaramine E. The cytochrome P450 monoxygenase okaG converts 12-deshydroxyl okaramine E into 3-desmethyl okaramine B which is further methylated by the methyltransferase okaF into okaramine B. In a shunt pathway, okaG and okaF together are also able to convert okaramine E into okaramine D. Okaramine H is produced by nonenzymatic conversion from okaramine A. The chain is Nonribosomal peptide synthetase rstn8 from Penicillium ochrochloron.